We begin with the raw amino-acid sequence, 343 residues long: Dihydroorotase (343 aa).

Residues His-13 and His-15 each contribute to the Zn(2+) site. Residues 15 to 17 and Asn-41 contribute to the substrate site; that span reads HLR. Positions 99, 136, and 174 each coordinate Zn(2+). Position 99 is an N6-carboxylysine (Lys-99). His-136 contributes to the substrate binding site. Residue Leu-219 coordinates substrate. Zn(2+) is bound at residue Asp-247. Asp-247 is an active-site residue. Substrate-binding residues include His-251 and Ala-263.

Belongs to the metallo-dependent hydrolases superfamily. DHOase family. Class II DHOase subfamily. As to quaternary structure, homodimer. Zn(2+) is required as a cofactor.

The catalysed reaction is (S)-dihydroorotate + H2O = N-carbamoyl-L-aspartate + H(+). The protein operates within pyrimidine metabolism; UMP biosynthesis via de novo pathway; (S)-dihydroorotate from bicarbonate: step 3/3. In terms of biological role, catalyzes the reversible cyclization of carbamoyl aspartate to dihydroorotate. The chain is Dihydroorotase from Shewanella baltica (strain OS155 / ATCC BAA-1091).